A 538-amino-acid polypeptide reads, in one-letter code: Importin subunit alpha-4 (538 aa).

The IBB domain occupies 1–58 (MSLRPSTRAELRKKIYKTGVDADEARRRREDNLVEIRKNKREDSLLKKRREGMMLQQQ). 8 ARM repeats span residues 112–152 (SPPI…NVAS), 155–194 (SDHT…NVAG), 197–237 (PNCR…NFCR), 239–278 (KPPT…YLSD), 281–320 (NDKI…NIVT), 323–363 (DSQT…NITA), 366–405 (KLQI…NATS), and 409–448 (HEQI…NILK).

The protein belongs to the importin alpha family. Forms a complex with importin subunit beta-1. Interacts with A.tumefaciens VirD2 and VirE2.

It is found in the nucleus envelope. Its function is as follows. Binds to conventional NLS motifs and mediates nuclear protein import across the nuclear envelope. Acts as a cellular receptor for the nuclear import of the virD2 protein of Agrobacterium and is essential for Agrobacterium-mediated root transformation. The polypeptide is Importin subunit alpha-4 (Arabidopsis thaliana (Mouse-ear cress)).